Consider the following 214-residue polypeptide: Osteoclast-stimulating factor 1 (214 aa).

The 60-residue stretch at 12–71 (GQVKVYRALFTFDPRTPDELYFEEGDILYISDTSDSNWWKGTCRGRTGLIPSNYVAEQAE) folds into the SH3 domain. ANK repeat units follow at residues 72 to 101 (SIDN…GING), 105 to 135 (AGNT…ELNQ), and 139 to 168 (LGDT…RTDV).

It localises to the cytoplasm. In terms of biological role, induces bone resorption, acting probably through a signaling cascade which results in the secretion of factor(s) enhancing osteoclast formation and activity. This Danio rerio (Zebrafish) protein is Osteoclast-stimulating factor 1 (ostf1).